We begin with the raw amino-acid sequence, 408 residues long: Elongation factor Tu, chloroplastic (408 aa).

One can recognise a tr-type G domain in the interval 10–214 (KPHVNIGTIG…AVDSYIPTPK (205 aa)). The G1 stretch occupies residues 19 to 26 (GHVDHGKT). GTP is bound at residue 19–26 (GHVDHGKT). T26 serves as a coordination point for Mg(2+). Residues 60 to 64 (GITIN) are G2. Residues 81 to 84 (DCPG) form a G3 region. Residues 81 to 85 (DCPGH) and 136 to 139 (NKED) each bind GTP. The G4 stretch occupies residues 136–139 (NKED). The G5 stretch occupies residues 174–176 (SAL).

The protein belongs to the TRAFAC class translation factor GTPase superfamily. Classic translation factor GTPase family. EF-Tu/EF-1A subfamily.

It localises to the plastid. The protein localises to the chloroplast. It catalyses the reaction GTP + H2O = GDP + phosphate + H(+). Its function is as follows. GTP hydrolase that promotes the GTP-dependent binding of aminoacyl-tRNA to the A-site of ribosomes during protein biosynthesis. This is Elongation factor Tu, chloroplastic (tufA) from Chara connivens (Convergent stonewort).